The primary structure comprises 197 residues: Protein-S-isoprenylcysteine O-methyltransferase A (197 aa).

3 helical membrane passes run 16–36 (MLLS…TIHG), 52–72 (ALAM…FPGL), and 81–101 (FGLI…ITAG). S-adenosyl-L-methionine-binding positions include 116–119 (HGLV), tyrosine 124, and 129–132 (HPSY). Residues 140–160 (VGTQVMLCNPVSAVAFAVVVW) traverse the membrane as a helical segment. Position 166 (arginine 166) interacts with substrate. Residue glutamate 170 participates in S-adenosyl-L-methionine binding.

Belongs to the class VI-like SAM-binding methyltransferase superfamily. Isoprenylcysteine carboxyl methyltransferase family. The cofactor is Zn(2+). In terms of tissue distribution, expressed primarily in flowers, stems, leaves and roots. Almost not expressed in siliques. Detected in root tips and vascular tissues of roots, cotyledons, petiols, hypocotyls, filaments, pollen grains and the distal and proximal portions of the gynoecium.

The protein localises to the endoplasmic reticulum membrane. It catalyses the reaction [protein]-C-terminal S-[(2E,6E)-farnesyl]-L-cysteine + S-adenosyl-L-methionine = [protein]-C-terminal S-[(2E,6E)-farnesyl]-L-cysteine methyl ester + S-adenosyl-L-homocysteine. Inhibited by farnesylthioacetic acid (FTAA) and N-acetyl-S-trans, trans-farnesyl-l-cysteine (AFC). Its function is as follows. Catalyzes the post-translational methylation of isoprenylated C-terminal cysteine residues, resulting in the modulation of the function of prenylated proteins. Involved in negative regulation of abscisic acid signaling. Carboxyl methylation is a reversible and potentially regulated step in the post-translational modification of prenylated proteins. The protein is Protein-S-isoprenylcysteine O-methyltransferase A of Arabidopsis thaliana (Mouse-ear cress).